Consider the following 706-residue polypeptide: Coiled-coil domain-containing protein 177 (706 aa).

Positions Met1–Glu11 are enriched in acidic residues. Disordered stretches follow at residues Met1 to Arg63, Ala179 to Leu262, and Ala268 to Gly287. 2 stretches are compositionally biased toward low complexity: residues Pro28–Pro49 and Ala179–Ser209. Over residues Pro210–Ala221 the composition is skewed to pro residues. Low complexity predominate over residues Ala242 to Glu257. The residue at position 310 (Ser310) is a Phosphoserine. Positions Ala360 to Gln624 form a coiled coil. Disordered stretches follow at residues Gln364–Ala386, Val398–Glu425, Asp448–His580, and Glu651–Lys706. Positions Gln368–Ala386 are enriched in basic and acidic residues. 3 stretches are compositionally biased toward basic and acidic residues: residues Asp448 to Leu529, Gln548 to His580, and Glu651 to Ala663. The segment covering Leu664–Ser674 has biased composition (low complexity). Residues His676–Lys706 show a composition bias toward basic and acidic residues.

The polypeptide is Coiled-coil domain-containing protein 177 (Ccdc177) (Mus musculus (Mouse)).